Here is an 868-residue protein sequence, read N- to C-terminus: DNA topoisomerase 1 (868 aa).

A Toprim domain is found at 3–147 (KSLVIVESPA…RYKRVVFNEI (145 aa)). A Mg(2+)-binding site is contributed by glutamate 9. Residues 34-70 (IRDLPTSGSSSSKEPAAKGRKSASEAPALSPKEKARR) form a disordered region. Residue aspartate 116 participates in Mg(2+) binding. The Topo IA-type catalytic domain occupies 163–580 (DINRVNAQQA…EFYGDFKKKL (418 aa)). The tract at residues 197-202 (SAGRVQ) is interaction with DNA. The active-site O-(5'-phospho-DNA)-tyrosine intermediate is tyrosine 324. 3 C4-type zinc fingers span residues 602–633 (CREC…KERC), 664–691 (CPIC…NPDC), and 713–738 (CDKC…NPTC).

This sequence belongs to the type IA topoisomerase family. Monomer. Mg(2+) is required as a cofactor.

It catalyses the reaction ATP-independent breakage of single-stranded DNA, followed by passage and rejoining.. Releases the supercoiling and torsional tension of DNA, which is introduced during the DNA replication and transcription, by transiently cleaving and rejoining one strand of the DNA duplex. Introduces a single-strand break via transesterification at a target site in duplex DNA. The scissile phosphodiester is attacked by the catalytic tyrosine of the enzyme, resulting in the formation of a DNA-(5'-phosphotyrosyl)-enzyme intermediate and the expulsion of a 3'-OH DNA strand. The free DNA strand then undergoes passage around the unbroken strand, thus removing DNA supercoils. Finally, in the religation step, the DNA 3'-OH attacks the covalent intermediate to expel the active-site tyrosine and restore the DNA phosphodiester backbone. The polypeptide is DNA topoisomerase 1 (Pseudomonas aeruginosa (strain ATCC 15692 / DSM 22644 / CIP 104116 / JCM 14847 / LMG 12228 / 1C / PRS 101 / PAO1)).